Reading from the N-terminus, the 349-residue chain is uncharacterized protein (349 aa).

Residues 51–160 (NIIKENKNNL…QDESYISIFQ (110 aa)) form the THUMP domain.

This is an uncharacterized protein from Methanocaldococcus jannaschii (strain ATCC 43067 / DSM 2661 / JAL-1 / JCM 10045 / NBRC 100440) (Methanococcus jannaschii).